The sequence spans 552 residues: Dihydroxy-acid dehydratase (552 aa).

Asp-78 serves as a coordination point for Mg(2+). Residue Cys-119 participates in [2Fe-2S] cluster binding. Asp-120 and Lys-121 together coordinate Mg(2+). Lys-121 bears the N6-carboxylysine mark. [2Fe-2S] cluster is bound at residue Cys-191. Glu-442 provides a ligand contact to Mg(2+). The active-site Proton acceptor is Ser-468.

This sequence belongs to the IlvD/Edd family. Homodimer. [2Fe-2S] cluster serves as cofactor. The cofactor is Mg(2+).

It carries out the reaction (2R)-2,3-dihydroxy-3-methylbutanoate = 3-methyl-2-oxobutanoate + H2O. The catalysed reaction is (2R,3R)-2,3-dihydroxy-3-methylpentanoate = (S)-3-methyl-2-oxopentanoate + H2O. Its pathway is amino-acid biosynthesis; L-isoleucine biosynthesis; L-isoleucine from 2-oxobutanoate: step 3/4. It functions in the pathway amino-acid biosynthesis; L-valine biosynthesis; L-valine from pyruvate: step 3/4. Functionally, functions in the biosynthesis of branched-chain amino acids. Catalyzes the dehydration of (2R,3R)-2,3-dihydroxy-3-methylpentanoate (2,3-dihydroxy-3-methylvalerate) into 2-oxo-3-methylpentanoate (2-oxo-3-methylvalerate) and of (2R)-2,3-dihydroxy-3-methylbutanoate (2,3-dihydroxyisovalerate) into 2-oxo-3-methylbutanoate (2-oxoisovalerate), the penultimate precursor to L-isoleucine and L-valine, respectively. The chain is Dihydroxy-acid dehydratase from Caldicellulosiruptor bescii (strain ATCC BAA-1888 / DSM 6725 / KCTC 15123 / Z-1320) (Anaerocellum thermophilum).